Reading from the N-terminus, the 262-residue chain is Ribosomal RNA small subunit methyltransferase A (262 aa).

S-adenosyl-L-methionine contacts are provided by His-16, Leu-18, Gly-43, Glu-64, Asp-89, and Asn-109.

The protein belongs to the class I-like SAM-binding methyltransferase superfamily. rRNA adenine N(6)-methyltransferase family. RsmA subfamily.

The protein localises to the cytoplasm. It catalyses the reaction adenosine(1518)/adenosine(1519) in 16S rRNA + 4 S-adenosyl-L-methionine = N(6)-dimethyladenosine(1518)/N(6)-dimethyladenosine(1519) in 16S rRNA + 4 S-adenosyl-L-homocysteine + 4 H(+). Specifically dimethylates two adjacent adenosines (A1518 and A1519) in the loop of a conserved hairpin near the 3'-end of 16S rRNA in the 30S particle. May play a critical role in biogenesis of 30S subunits. The sequence is that of Ribosomal RNA small subunit methyltransferase A from Xanthomonas euvesicatoria pv. vesicatoria (strain 85-10) (Xanthomonas campestris pv. vesicatoria).